A 462-amino-acid chain; its full sequence is Golgi-associated PDZ and coiled-coil motif-containing protein (462 aa).

Residues 83 to 194 (KAQSVSQINH…EDEALRGHIA (112 aa)) adopt a coiled-coil conformation. The PDZ domain occupies 288-371 (KVLLLKEDHE…EIEFEVVYVA (84 aa)). A disordered region spans residues 427–449 (TDTHENGDLGTASETPLDDGASK).

Homooligomer. Interacts with FZD5. Interacts with FZD8. Interacts with GRID2 and BECN1. Interacts with CSPG5. Interacts with CLCN3. Interacts with STX6. Interacts with CFTR. Interacts with ASIC3. Interacts with GOLGA3. Interacts with NLGN1. Interacts with RHOQ. Interacts with MARCHF2; the interaction leads to CFTR ubiquitination and degradation. May interact with CACNG2. Interacts with CCDC62.

It is found in the cytoplasm. The protein localises to the golgi apparatus membrane. The protein resides in the golgi apparatus. Its subcellular location is the trans-Golgi network membrane. It localises to the synapse. It is found in the postsynaptic density. The protein localises to the cell projection. The protein resides in the dendrite. In terms of biological role, plays a role in intracellular protein trafficking and degradation. May regulate CFTR chloride currents and acid-induced ASIC3 currents by modulating cell surface expression of both channels. May also regulate the intracellular trafficking of the ADR1B receptor. May play a role in autophagy. Together with MARCHF2 mediates the ubiquitination and lysosomal degradation of CFTR. Overexpression results in CFTR intracellular retention and degradation in the lysosomes. The protein is Golgi-associated PDZ and coiled-coil motif-containing protein (GOPC) of Pongo abelii (Sumatran orangutan).